A 142-amino-acid polypeptide reads, in one-letter code: uncharacterized protein (142 aa).

In terms of domain architecture, N-acetyltransferase spans 1-120 (MADKFDANDE…TILKWEKNMD (120 aa)).

Belongs to the acetyltransferase family.

This is an uncharacterized protein from Streptococcus pyogenes serotype M3 (strain ATCC BAA-595 / MGAS315).